Reading from the N-terminus, the 162-residue chain is Regulator of sigma D (162 aa).

It belongs to the Rsd/AlgQ family. Interacts with RpoD.

It is found in the cytoplasm. Functionally, binds RpoD and negatively regulates RpoD-mediated transcription activation by preventing the interaction between the primary sigma factor RpoD with the catalytic core of the RNA polymerase and with promoter DNA. May be involved in replacement of the RNA polymerase sigma subunit from RpoD to RpoS during the transition from exponential growth to the stationary phase. The sequence is that of Regulator of sigma D from Salmonella typhi.